Reading from the N-terminus, the 2244-residue chain is Multifunctional protein ura1 (2244 aa).

The interval 1-437 (MSGLLPSLSS…GPRDTEFLFD (437 aa)) is GATase (Glutamine amidotransferase). The tract at residues 16–44 (QSEALGMPRTHGPKPSENDPKEPTCSPSP) is disordered. L-glutamine-binding residues include S101, G309, and G311. The Glutamine amidotransferase type-1 domain maps to 264 to 449 (RILVIDVGMK…IDVVKRSADA (186 aa)). The active-site Nucleophile; for GATase activity is the C338. L-glutamine contacts are provided by Q342, N380, G382, and Y383. Catalysis depends on for GATase activity residues H422 and E424. Residues 438 to 477 (VFIDVVKRSADAKSLQPFKLPGGTIEENRSRHPLVDAKRV) are linker. Residues 478–1014 (LILGSGGLSI…VEHDIHFNDK (537 aa)) are CPSase A. Residues 478-1514 (LILGSGGLSI…TNVKCAKLMI (1037 aa)) are CPSase (Carbamoyl phosphate synthase). Residues R594, R634, G640, G641, R671, M673, E678, G704, I705, H706, Q747, and E761 each coordinate ATP. The ATP-grasp 1 domain occupies 598–790 (ARAMDEINEK…LAFTAAKLGL (193 aa)). Mg(2+)-binding residues include Q747, E761, and N763. Mn(2+) is bound by residues Q747, E761, and N763. The tract at residues 1015–1514 (GVMVLGSGVY…TNVKCAKLMI (500 aa)) is CPSase B. S1119 carries the post-translational modification Phosphoserine. The ATP-grasp 2 domain maps to 1133 to 1324 (SRMLDDIGVD…MISMATDVIM (192 aa)). ATP is bound by residues R1169, K1208, I1210, E1215, G1240, V1241, H1242, S1243, Q1283, and E1295. Mg(2+) contacts are provided by Q1283, E1295, and N1297. The Mn(2+) site is built by Q1283, E1295, and N1297. In terms of domain architecture, MGS-like spans 1390–1552 (FRLPKKNILI…INISAFLPEF (163 aa)). The linker stretch occupies residues 1515–1524 (EAICRNLDFS). The defective DHOase domain stretch occupies residues 1525–1853 (LSTVDFQSSF…FDGHDVFFDG (329 aa)). Residues 1854 to 1935 (ELNFEHTYGR…VQLINSSPFY (82 aa)) are linker. Phosphoserine occurs at positions 1881 and 1885. Residues 1936-2244 (RKHIISVHQV…CVMGATEVAN (309 aa)) form an ATCase (Aspartate transcarbamylase) region. Carbamoyl phosphate contacts are provided by R1988 and T1989. K2016 is a binding site for L-aspartate. R2037, H2065, and Q2068 together coordinate carbamoyl phosphate. 2 residues coordinate L-aspartate: R2098 and R2160. Residues L2199 and P2200 each contribute to the carbamoyl phosphate site.

It in the N-terminal section; belongs to the CarA family. The protein in the 2nd section; belongs to the CarB family. This sequence in the 3rd section; belongs to the metallo-dependent hydrolases superfamily. DHOase family. CAD subfamily. In the C-terminal section; belongs to the aspartate/ornithine carbamoyltransferase superfamily. ATCase family. Mg(2+) serves as cofactor. Requires Mn(2+) as cofactor.

The catalysed reaction is hydrogencarbonate + L-glutamine + 2 ATP + H2O = carbamoyl phosphate + L-glutamate + 2 ADP + phosphate + 2 H(+). It catalyses the reaction L-glutamine + H2O = L-glutamate + NH4(+). The enzyme catalyses hydrogencarbonate + NH4(+) + 2 ATP = carbamoyl phosphate + 2 ADP + phosphate + 2 H(+). It carries out the reaction carbamoyl phosphate + L-aspartate = N-carbamoyl-L-aspartate + phosphate + H(+). It functions in the pathway pyrimidine metabolism; UMP biosynthesis via de novo pathway; (S)-dihydroorotate from bicarbonate: step 1/3. It participates in pyrimidine metabolism; UMP biosynthesis via de novo pathway; (S)-dihydroorotate from bicarbonate: step 2/3. Its activity is regulated as follows. Both CPSase and ATCase activities are feedback inhibited by the end product UTP. Its function is as follows. Multifunctional protein that encodes the first 2 enzymatic activities of the de novo pyrimidine pathway: carbamoylphosphate synthetase (CPSase; EC 6.3.5.5) and aspartate transcarbamylase (ATCase; EC 2.1.3.2). The CPSase-function is accomplished in 2 steps, by a glutamine-dependent amidotransferase activity (GATase) that binds and cleaves glutamine to produce ammonia, followed by an ammonium-dependent carbamoyl phosphate synthetase, which reacts with the ammonia, hydrogencarbonate and ATP to form carbamoyl phosphate. The endogenously produced carbamoyl phosphate is sequestered and channeled to the ATCase active site. ATCase then catalyzes the formation of carbamoyl-L-aspartate from L-aspartate and carbamoyl phosphate. The chain is Multifunctional protein ura1 (ura1) from Schizosaccharomyces pombe (strain 972 / ATCC 24843) (Fission yeast).